The following is a 299-amino-acid chain: Probable tyrosine phosphatase protein J4 (299 aa).

The Tyrosine-protein phosphatase domain occupies 16–289; that stretch reads VEALDFLSFM…VYCYQALYVW (274 aa). The active-site Phosphocysteine intermediate is Cys-230.

This sequence belongs to the protein-tyrosine phosphatase family.

It carries out the reaction O-phospho-L-tyrosyl-[protein] + H2O = L-tyrosyl-[protein] + phosphate. The chain is Probable tyrosine phosphatase protein J4 (J5) from Microplitis demolitor bracovirus (isolate Webb) (MdBV).